A 279-amino-acid polypeptide reads, in one-letter code: Dehydrogenase/reductase SDR family member 4 (279 aa).

37-61 (LVTASTDGIGLAIARRLAQDGAHVV) serves as a coordination point for NADP(+). The residue at position 93 (Lys-93) is an N6-acetyllysine; alternate. Lys-93 bears the N6-succinyllysine; alternate mark. Ser-170 contacts substrate. The active-site Proton acceptor is the Tyr-183. Residue Lys-187 coordinates NADP(+). An N6-acetyllysine; alternate modification is found at Lys-217. At Lys-217 the chain carries N6-succinyllysine; alternate. Phosphoserine is present on Ser-221. An N6-succinyllysine mark is found at Lys-228 and Lys-235. The Peroxisomal targeting signal signature appears at 277-279 (SRL).

It belongs to the short-chain dehydrogenases/reductases (SDR) family. Homotetramer. As to expression, detected in heart, kidney, liver and small intestine. Detected at lower levels in brain, lung, stomach and spleen.

The protein resides in the peroxisome. The catalysed reaction is a secondary alcohol + NADP(+) = a ketone + NADPH + H(+). The enzyme catalyses 3alpha-hydroxy-5beta-pregnan-20-one + NADP(+) = 5beta-pregnan-3,20-dione + NADPH + H(+). It carries out the reaction 5beta-dihydrotestosterone + NADPH + H(+) = 5beta-androstane-3alpha,17beta-diol + NADP(+). It catalyses the reaction all-trans-retinol + NADP(+) = all-trans-retinal + NADPH + H(+). The catalysed reaction is isatin + NADPH + H(+) = 3-hydroxyindolin-2-one + NADP(+). With respect to regulation, inhibited by kaempferol, quercetin, genistein and myristic acid. Its function is as follows. NADPH-dependent oxidoreductase which catalyzes the reduction of a variety of compounds bearing carbonyl groups including ketosteroids, alpha-dicarbonyl compounds, aldehydes, aromatic ketones and quinones. Reduces all-trans-retinal and 9-cis retinal. Reduces 3-ketosteroids and benzil into 3alpha-hydroxysteroids and S-benzoin, respectively, in contrast to the stereoselectivity of primates DHRS4s which produce 3beta-hydroxysteroids and R-benzoin. In the reverse reaction, catalyzes the NADP-dependent oxidation of 3alpha-hydroxysteroids and alcohol, but with much lower efficiency. Involved in the metabolism of 3alpha-hydroxysteroids, retinoid, isatin and xenobiotic carbonyl compounds. This Sus scrofa (Pig) protein is Dehydrogenase/reductase SDR family member 4 (DHRS4).